Consider the following 290-residue polypeptide: Shikimate dehydrogenase (NADP(+)) (290 aa).

Shikimate contacts are provided by residues 22–24 (SLS) and T68. K72 (proton acceptor) is an active-site residue. D84 provides a ligand contact to NADP(+). 2 residues coordinate shikimate: N93 and D108. NADP(+) is bound by residues 133–137 (GSGGS) and I228. Y230 contributes to the shikimate binding site. G251 serves as a coordination point for NADP(+).

It belongs to the shikimate dehydrogenase family. As to quaternary structure, homodimer.

The catalysed reaction is shikimate + NADP(+) = 3-dehydroshikimate + NADPH + H(+). The protein operates within metabolic intermediate biosynthesis; chorismate biosynthesis; chorismate from D-erythrose 4-phosphate and phosphoenolpyruvate: step 4/7. Functionally, involved in the biosynthesis of the chorismate, which leads to the biosynthesis of aromatic amino acids. Catalyzes the reversible NADPH linked reduction of 3-dehydroshikimate (DHSA) to yield shikimate (SA). The chain is Shikimate dehydrogenase (NADP(+)) from Leptospira interrogans serogroup Icterohaemorrhagiae serovar Lai (strain 56601).